The sequence spans 1163 residues: Protein phosphatase 1 regulatory subunit 26 (1163 aa).

Residues H65–L83 show a composition bias toward basic and acidic residues. 7 disordered regions span residues H65 to K91, R144 to R253, R266 to L393, A463 to S496, V514 to L653, R672 to A929, and T1073 to L1163. 2 stretches are compositionally biased toward polar residues: residues H163–S179 and D189–E201. A compositionally biased stretch (basic and acidic residues) spans I208 to D236. The segment covering K273–L297 has biased composition (polar residues). The segment covering M315 to R324 has biased composition (basic residues). The span at G515–I535 shows a compositional bias: low complexity. 2 stretches are compositionally biased toward basic and acidic residues: residues K566–Q581 and A634–S645. Basic residues predominate over residues R672 to R682. Residues T766–S780 are compositionally biased toward low complexity. Acidic residues predominate over residues S783–E792. Basic and acidic residues-rich tracts occupy residues L793–R808 and E850–R859. A compositionally biased stretch (polar residues) spans T860 to K871. The span at S901–R910 shows a compositional bias: low complexity. The segment covering Q1105–Q1131 has biased composition (basic and acidic residues). S1111 is subject to Phosphoserine. Composition is skewed to polar residues over residues Q1133 to T1146 and A1154 to L1163.

In terms of assembly, interacts with UTP20 and PPP1CA.

The protein resides in the nucleus. The protein localises to the nucleolus. Inhibits phosphatase activity of protein phosphatase 1 (PP1) complexes. May positively regulate cell proliferation. The polypeptide is Protein phosphatase 1 regulatory subunit 26 (Ppp1r26) (Mus musculus (Mouse)).